We begin with the raw amino-acid sequence, 338 residues long: Ornithine carbamoyltransferase (338 aa).

Carbamoyl phosphate is bound by residues 56–59 (STRT), Arg107, and 134–137 (HPTQ). L-ornithine-binding positions include Asn168, Asp232, and 236–237 (SM). Carbamoyl phosphate is bound by residues 274 to 275 (CL) and Arg320.

The protein belongs to the aspartate/ornithine carbamoyltransferase superfamily. OTCase family.

It localises to the cytoplasm. It catalyses the reaction carbamoyl phosphate + L-ornithine = L-citrulline + phosphate + H(+). It participates in amino-acid degradation; L-arginine degradation via ADI pathway; carbamoyl phosphate from L-arginine: step 2/2. Functionally, reversibly catalyzes the transfer of the carbamoyl group from carbamoyl phosphate (CP) to the N(epsilon) atom of ornithine (ORN) to produce L-citrulline. This Buchnera aphidicola subsp. Acyrthosiphon pisum (strain 5A) protein is Ornithine carbamoyltransferase.